A 158-amino-acid polypeptide reads, in one-letter code: Large ribosomal subunit protein uL30 (158 aa).

Belongs to the universal ribosomal protein uL30 family. In terms of assembly, part of the 50S ribosomal subunit.

The sequence is that of Large ribosomal subunit protein uL30 from Saccharolobus islandicus (strain Y.G.57.14 / Yellowstone #1) (Sulfolobus islandicus).